The following is a 452-amino-acid chain: Probable ECA polymerase (452 aa).

11 helical membrane passes run 6-26 (FSGLLVVWLLSTLFIATLTWF), 37-57 (VFFSLLFLLTFFFGFPLTSVL), 63-83 (VGVAPPEILLQALLSAACFYG), 118-138 (VILMGIALVSVAIFFMHNGFL), 155-175 (GVALKRFFYFFIPAMLVVYFL), 181-201 (AWLFFLVSTVAFGLLTYMIVG), 207-227 (IIIAFAIFLFIGIIRGWISLW), 228-248 (MLAAAGVLGIVGMFWLALKRY), 341-361 (LVVMGGALFIPLGAIVVGLII), 378-398 (YKAAILHSFCFGAIFNMIVLV), and 410-430 (VFFLVVFGASLLVAKLLFWLF).

The protein belongs to the WzyE family. In terms of assembly, probably part of a complex composed of WzxE, WzyE and WzzE.

It is found in the cell inner membrane. It functions in the pathway bacterial outer membrane biogenesis; enterobacterial common antigen biosynthesis. In terms of biological role, probably involved in the polymerization of enterobacterial common antigen (ECA) trisaccharide repeat units. The sequence is that of Probable ECA polymerase from Salmonella gallinarum (strain 287/91 / NCTC 13346).